The sequence spans 79 residues: Antimicrobial peptide UyCT1 (79 aa).

A signal peptide spans 1 to 23 (MKTQLAFLAITVILMQLFAQTEA). I37 is modified (isoleucine amide). Positions 41–79 (GLRNVDQIADLFDSGLSDADDLFDSGLSDADAKFMKMFM) are excised as a propeptide.

Belongs to the non-disulfide-bridged peptide (NDBP) superfamily. Short antimicrobial peptide (group 4) family. In terms of tissue distribution, expressed by the venom gland.

It localises to the secreted. It is found in the target cell membrane. Functionally, inhibits the growth of Gram-positive (S.aureus, MIC=15 uM) and Gram-negative bacteria (E.coli, MIC=10 uM and P.aeruginosa, MIC=10 uM). It also shows 26% of hemolysis when 15 uM are tested (81% at 50 uM). Inhibits the growth of Gram-negative bacteria (E.coli, MIC=25 uM and P.aeruginosa, MIC=40 uM). It also shows 7% of hemolysis when 50 uM are tested. Does not show activity against the Gram-positive bacteria S.aureus. The protein is Antimicrobial peptide UyCT1 of Urodacus yaschenkoi (Inland robust scorpion).